The primary structure comprises 794 residues: DNA ligase (794 aa).

NAD(+) is bound by residues 35-39 (DAEYD), 84-85 (SL), and E126. Catalysis depends on K128, which acts as the N6-AMP-lysine intermediate. 4 residues coordinate NAD(+): R149, E186, K302, and K326. Residues C420, C423, C450, and C456 each coordinate Zn(2+). Positions 711–794 (VEGLPLAGQT…KLFDEHGVAR (84 aa)) constitute a BRCT domain.

This sequence belongs to the NAD-dependent DNA ligase family. LigA subfamily. Mg(2+) is required as a cofactor. It depends on Mn(2+) as a cofactor.

The enzyme catalyses NAD(+) + (deoxyribonucleotide)n-3'-hydroxyl + 5'-phospho-(deoxyribonucleotide)m = (deoxyribonucleotide)n+m + AMP + beta-nicotinamide D-nucleotide.. DNA ligase that catalyzes the formation of phosphodiester linkages between 5'-phosphoryl and 3'-hydroxyl groups in double-stranded DNA using NAD as a coenzyme and as the energy source for the reaction. It is essential for DNA replication and repair of damaged DNA. The sequence is that of DNA ligase from Pseudomonas aeruginosa (strain LESB58).